A 440-amino-acid polypeptide reads, in one-letter code: Zinc finger MYND domain-containing protein 10 (440 aa).

An interaction with DNAAF11 region spans residues 366 to 440 (QDLRLQARRW…VLAAQGDRAK (75 aa)). The Zn(2+) site is built by C394, C397, C405, C408, C414, C418, H426, and C430. The MYND-type zinc finger occupies 394-430 (CAYCSAEASKRCSRCQNEWYCCRECQVKHWEKHGKTC).

This sequence belongs to the ZMYND10 family. As to quaternary structure, interacts (via C-terminus) with DNAAF11 (via CS domain); this interaction stabilizes DNAAF11 at the protein level. Interacts (via C-terminus) with DNAL1; this interaction stabilizes DNAL1 at the protein level. Interacts with DNAAF4, HSPA8, IQUB, RUVBL2 and DYNTL5.

Its subcellular location is the cytoplasm. The protein resides in the cytoskeleton. It is found in the microtubule organizing center. The protein localises to the centrosome. It localises to the centriolar satellite. Its subcellular location is the apical cell membrane. The protein resides in the dynein axonemal particle. In terms of biological role, plays a role in axonemal structure organization and motility. Involved in axonemal pre-assembly of inner and outer dynein arms (IDA and ODA, respectively) for proper axoneme building for cilia motility. May act by indirectly regulating transcription of dynein proteins. The protein is Zinc finger MYND domain-containing protein 10 of Homo sapiens (Human).